The chain runs to 226 residues: UPF0758 protein GK2618 (226 aa).

An MPN domain is found at 104–226; the sequence is VIRCPEDGAK…FISLKEKGYV (123 aa). Zn(2+) is bound by residues His175, His177, and Asp188. The JAMM motif motif lies at 175–188; the sequence is HNHPSGDPTPSRED.

The protein belongs to the UPF0758 family.

This Geobacillus kaustophilus (strain HTA426) protein is UPF0758 protein GK2618.